A 989-amino-acid polypeptide reads, in one-letter code: Protease PrtH (989 aa).

Repeats lie at residues 270–323 (TPTD…KCVN) and 528–581 (SPAS…VCVD). The interval 969 to 989 (PRDTPWRYGKRELPPSASGMR) is disordered.

The protein belongs to the peptidase C25 family.

Its subcellular location is the cytoplasmic vesicle. In terms of biological role, cleaves human complement component C3. May enable P.gingivalis to evade complement-mediated killing during the immune response. Plays an important role in soft tissue infections and is a virulence factor. In Porphyromonas gingivalis (strain ATCC BAA-308 / W83), this protein is Protease PrtH (prtH).